The sequence spans 561 residues: Mercuric reductase (561 aa).

Residues 2–65 (THLKITGMTC…AVAGLGYKAT (64 aa)) enclose the HMA domain. A metal cation-binding residues include cysteine 11 and cysteine 14. FAD-binding residues include alanine 110, glycine 130, and threonine 135. The cysteines at positions 136 and 141 are disulfide-linked. 4 residues coordinate FAD: lysine 145, alanine 211, aspartate 403, and valine 411. The Hg(2+) site is built by cysteine 558 and cysteine 559.

The protein belongs to the class-I pyridine nucleotide-disulfide oxidoreductase family. As to quaternary structure, homodimer. FAD is required as a cofactor.

It carries out the reaction Hg + NADP(+) + H(+) = Hg(2+) + NADPH. Resistance to Hg(2+) in bacteria appears to be governed by a specialized system which includes mercuric reductase. MerA protein is responsible for volatilizing mercury as Hg(0). Plays a pivotal role in mercury resistance under thiol-depleted conditions and cell protection. Protects cells under thiol-depleted conditions. This is Mercuric reductase (merA) from Pseudomonas aeruginosa.